Reading from the N-terminus, the 229-residue chain is PKHD-type hydroxylase Rpal_3968 (229 aa).

The Fe2OG dioxygenase domain maps to 78 to 180 (QIFPPLFNRY…RVASFFWLQS (103 aa)). Residues His98, Asp100, and His161 each coordinate Fe cation. Arg171 is a 2-oxoglutarate binding site.

The cofactor is Fe(2+). It depends on L-ascorbate as a cofactor.

The chain is PKHD-type hydroxylase Rpal_3968 from Rhodopseudomonas palustris (strain TIE-1).